A 543-amino-acid chain; its full sequence is Proline--tRNA ligase, chloroplastic/mitochondrial (543 aa).

A disordered region spans residues 41–63 (ATAPSGTASPETKSSEVDRLRSD). Over residues 53 to 63 (KSSEVDRLRSD) the composition is skewed to basic and acidic residues.

The protein belongs to the class-II aminoacyl-tRNA synthetase family.

It is found in the plastid. The protein resides in the chloroplast. Its subcellular location is the mitochondrion. The catalysed reaction is tRNA(Pro) + L-proline + ATP = L-prolyl-tRNA(Pro) + AMP + diphosphate. Its function is as follows. Catalyzes the attachment of proline to tRNA(Pro) in a two-step reaction: proline is first activated by ATP to form Pro-AMP and then transferred to the acceptor end of tRNA(Pro). In Arabidopsis thaliana (Mouse-ear cress), this protein is Proline--tRNA ligase, chloroplastic/mitochondrial.